Consider the following 189-residue polypeptide: Interferon alpha-5 (189 aa).

The N-terminal stretch at 1–23 (MARLCAFLMVLPVLSYWPTCSLG) is a signal peptide. Cystine bridges form between Cys-24–Cys-122 and Cys-52–Cys-162. Asn-101 carries an N-linked (GlcNAc...) asparagine glycan.

The protein belongs to the alpha/beta interferon family.

It is found in the secreted. Produced by macrophages, IFN-alpha have antiviral activities. Interferon stimulates the production of two enzymes: a protein kinase and an oligoadenylate synthetase. In Mus musculus (Mouse), this protein is Interferon alpha-5 (Ifna5).